We begin with the raw amino-acid sequence, 511 residues long: Apolipoprotein N-acyltransferase (511 aa).

6 helical membrane-spanning segments follow: residues 7–25, 58–78, 90–110, 125–145, 163–183, and 192–212; these read PGWP…TPLA, GWWY…VSIH, FLML…AWLW, LAFA…LTGF, VPVG…ALLV, and GASL…GLYL. Residues 230 to 470 enclose the CN hydrolase domain; sequence IQGNIAQELK…QGILRGEVIP (241 aa). Glu269 functions as the Proton acceptor in the catalytic mechanism. Lys330 is an active-site residue. The Nucleophile role is filled by Cys382. The chain crosses the membrane as a helical span at residues 478–498; it reads LQYRVWPLAGLAGVLLLWALL.

Belongs to the CN hydrolase family. Apolipoprotein N-acyltransferase subfamily.

The protein localises to the cell inner membrane. It carries out the reaction N-terminal S-1,2-diacyl-sn-glyceryl-L-cysteinyl-[lipoprotein] + a glycerophospholipid = N-acyl-S-1,2-diacyl-sn-glyceryl-L-cysteinyl-[lipoprotein] + a 2-acyl-sn-glycero-3-phospholipid + H(+). Its pathway is protein modification; lipoprotein biosynthesis (N-acyl transfer). Functionally, catalyzes the phospholipid dependent N-acylation of the N-terminal cysteine of apolipoprotein, the last step in lipoprotein maturation. In Pseudomonas paraeruginosa (strain DSM 24068 / PA7) (Pseudomonas aeruginosa (strain PA7)), this protein is Apolipoprotein N-acyltransferase.